Reading from the N-terminus, the 702-residue chain is Elongation factor G (702 aa).

Residues 8–290 form the tr-type G domain; that stretch reads ERYRNIGISA…AVIEYLPAPT (283 aa). Residues 17-24, 88-92, and 142-145 contribute to the GTP site; these read AHIDAGKT, DTPGH, and NKMD.

This sequence belongs to the TRAFAC class translation factor GTPase superfamily. Classic translation factor GTPase family. EF-G/EF-2 subfamily.

The protein localises to the cytoplasm. Functionally, catalyzes the GTP-dependent ribosomal translocation step during translation elongation. During this step, the ribosome changes from the pre-translocational (PRE) to the post-translocational (POST) state as the newly formed A-site-bound peptidyl-tRNA and P-site-bound deacylated tRNA move to the P and E sites, respectively. Catalyzes the coordinated movement of the two tRNA molecules, the mRNA and conformational changes in the ribosome. The protein is Elongation factor G of Yersinia pseudotuberculosis serotype O:1b (strain IP 31758).